Reading from the N-terminus, the 338-residue chain is Glycerol-3-phosphate dehydrogenase [NAD(P)+] (338 aa).

NADPH contacts are provided by S14, F15, R35, and K109. Sn-glycerol 3-phosphate is bound by residues K109 and G137. A141 is a binding site for NADPH. Residues K192, D247, S257, R258, and N259 each contribute to the sn-glycerol 3-phosphate site. The Proton acceptor role is filled by K192. NADPH is bound at residue R258. NADPH-binding residues include L282 and E284.

Belongs to the NAD-dependent glycerol-3-phosphate dehydrogenase family.

Its subcellular location is the cytoplasm. It catalyses the reaction sn-glycerol 3-phosphate + NAD(+) = dihydroxyacetone phosphate + NADH + H(+). It carries out the reaction sn-glycerol 3-phosphate + NADP(+) = dihydroxyacetone phosphate + NADPH + H(+). Its pathway is membrane lipid metabolism; glycerophospholipid metabolism. Catalyzes the reduction of the glycolytic intermediate dihydroxyacetone phosphate (DHAP) to sn-glycerol 3-phosphate (G3P), the key precursor for phospholipid synthesis. This chain is Glycerol-3-phosphate dehydrogenase [NAD(P)+], found in Rickettsia rickettsii (strain Iowa).